Reading from the N-terminus, the 155-residue chain is Large ribosomal subunit protein uL22 (155 aa).

The protein belongs to the universal ribosomal protein uL22 family. In terms of assembly, part of the 50S ribosomal subunit.

This protein binds specifically to 23S rRNA. It makes multiple contacts with different domains of the 23S rRNA in the assembled 50S subunit and ribosome. Its function is as follows. The globular domain of the protein is located near the polypeptide exit tunnel on the outside of the subunit, while an extended beta-hairpin is found that lines the wall of the exit tunnel in the center of the 70S ribosome. In Pyrococcus abyssi (strain GE5 / Orsay), this protein is Large ribosomal subunit protein uL22.